The chain runs to 598 residues: Probable translation initiation factor IF-2 (598 aa).

Positions 8-226 constitute a tr-type G domain; sequence IRQPIISVLG…VTGLAQRFLE (219 aa). The tract at residues 17-24 is G1; that stretch reads GHVDHGKT. 17–24 serves as a coordination point for GTP; the sequence is GHVDHGKT. Residues 42-46 form a G2 region; the sequence is GITQH. Positions 81-84 are G3; sequence DTPG. Residues 81–85 and 135–138 each bind GTP; these read DTPGH and NKVD. A G4 region spans residues 135 to 138; sequence NKVD. A G5 region spans residues 203-205; it reads SGV.

It belongs to the TRAFAC class translation factor GTPase superfamily. Classic translation factor GTPase family. IF-2 subfamily.

Its function is as follows. Function in general translation initiation by promoting the binding of the formylmethionine-tRNA to ribosomes. Seems to function along with eIF-2. The polypeptide is Probable translation initiation factor IF-2 (Methanopyrus kandleri (strain AV19 / DSM 6324 / JCM 9639 / NBRC 100938)).